The chain runs to 366 residues: Phospho-N-acetylmuramoyl-pentapeptide-transferase (366 aa).

Transmembrane regions (helical) follow at residues 27–47 (AALFTSALIVFLFGPAIISSL), 71–91 (TPTMGGLMILAGIVGSALLWA), 93–113 (LSSIYVVSTLLVTLGFGAIGF), 134–154 (LGIEFVIAAIAVFFMMQAAQS), 174–194 (LMLNLGYFFVLFGGFVIVGAG), 205–225 (GLAIVPVMIASAAFGLIAYLA), 245–265 (LAVILGAVIGAGLGFLWFNAP), 268–288 (AIFMGDTGSLALGGLIGTVAV), 297–317 (VIIGGLFVIETLSVIIQVFWF), and 343–363 (QVVIRFWIIAVILAMVGLSTL).

Belongs to the glycosyltransferase 4 family. MraY subfamily. Requires Mg(2+) as cofactor.

Its subcellular location is the cell inner membrane. The catalysed reaction is UDP-N-acetyl-alpha-D-muramoyl-L-alanyl-gamma-D-glutamyl-meso-2,6-diaminopimeloyl-D-alanyl-D-alanine + di-trans,octa-cis-undecaprenyl phosphate = di-trans,octa-cis-undecaprenyl diphospho-N-acetyl-alpha-D-muramoyl-L-alanyl-D-glutamyl-meso-2,6-diaminopimeloyl-D-alanyl-D-alanine + UMP. Its pathway is cell wall biogenesis; peptidoglycan biosynthesis. Catalyzes the initial step of the lipid cycle reactions in the biosynthesis of the cell wall peptidoglycan: transfers peptidoglycan precursor phospho-MurNAc-pentapeptide from UDP-MurNAc-pentapeptide onto the lipid carrier undecaprenyl phosphate, yielding undecaprenyl-pyrophosphoryl-MurNAc-pentapeptide, known as lipid I. The protein is Phospho-N-acetylmuramoyl-pentapeptide-transferase of Sinorhizobium fredii (strain NBRC 101917 / NGR234).